Here is a 96-residue protein sequence, read N- to C-terminus: Cytochrome c-553 (96 aa).

A signal peptide spans 1 to 19; it reads MKKVIMALGVLAFANALMA. Heme c-binding residues include Cys29, Cys32, His33, and Met73.

The protein belongs to the cytochrome c family. Binds 1 heme c group covalently per subunit.

Its subcellular location is the periplasm. In terms of biological role, natural electron acceptor for a formate dehydrogenase. This chain is Cytochrome c-553, found in Helicobacter pylori (strain ATCC 700392 / 26695) (Campylobacter pylori).